Reading from the N-terminus, the 122-residue chain is Large ribosomal subunit protein uL14 (122 aa).

It belongs to the universal ribosomal protein uL14 family. In terms of assembly, part of the 50S ribosomal subunit. Forms a cluster with proteins L3 and L19. In the 70S ribosome, L14 and L19 interact and together make contacts with the 16S rRNA in bridges B5 and B8.

In terms of biological role, binds to 23S rRNA. Forms part of two intersubunit bridges in the 70S ribosome. The chain is Large ribosomal subunit protein uL14 from Shewanella woodyi (strain ATCC 51908 / MS32).